A 224-amino-acid polypeptide reads, in one-letter code: uncharacterized protein (224 aa).

Residues 10–77 enclose the HTH gntR-type domain; the sequence is TPYYLQFYNQ…DRNGFSITSL (68 aa). Residues 37–56 constitute a DNA-binding region (H-T-H motif); the sequence is ETQLAKSFGVSRSPIREAMR.

This is an uncharacterized protein from Bacillus subtilis (strain 168).